The chain runs to 209 residues: uncharacterized protein (209 aa).

The segment at 177–209 (DNSDNSSDSDDSDSLDGSDDLNDSDNVDNLFVG) is disordered. Acidic residues predominate over residues 183 to 202 (SDSDDSDSLDGSDDLNDSDN).

This is an uncharacterized protein from Acanthamoeba polyphaga (Amoeba).